Reading from the N-terminus, the 503-residue chain is N-fatty-acyl-amino acid synthase/hydrolase PM20D1 (503 aa).

Residues 1–24 (MAELLASLPAWAAVLLLFFATVSG) form the signal peptide. Asparagine 72 carries N-linked (GlcNAc...) asparagine glycosylation. A Zn(2+)-binding site is contributed by histidine 125. Aspartate 127 is a catalytic residue. Aspartate 157 serves as a coordination point for Zn(2+). The active-site Proton acceptor is the glutamate 191. Zn(2+) is bound by residues glutamate 192 and aspartate 218. Asparagine 443 carries N-linked (GlcNAc...) asparagine glycosylation. Histidine 465 serves as a coordination point for Zn(2+).

Belongs to the peptidase M20A family. The cofactor is Zn(2+). As to expression, in addition to being detected in blood (at protein level), PM20D1 is also highly expressed in other tissues including brown adipocytes, liver and kidney. It is also expressed in small intestine, large intestine, heart and pancreas.

It localises to the secreted. The catalysed reaction is an N-acyl-L-amino acid + H2O = an L-alpha-amino acid + a carboxylate. It catalyses the reaction an N-acyl-aromatic L-alpha-amino acid + H2O = an aromatic L-alpha-amino acid + a carboxylate. It carries out the reaction N-(5Z,8Z,11Z,14Z)-eicosatetraenoyl-glycine + H2O = (5Z,8Z,11Z,14Z)-eicosatetraenoate + glycine. The enzyme catalyses N-hexadecanoyl-L-phenylalanine + H2O = hexadecanoate + L-phenylalanine. The catalysed reaction is N-octadecanoyl-L-phenylalanine + H2O = octadecanoate + L-phenylalanine. It catalyses the reaction N-(4Z,7Z,10Z,13Z,16Z,19Z-docosahexaenoyl)-L-phenylalanine + H2O = (4Z,7Z,10Z,13Z,16Z,19Z)-docosahexaenoate + L-phenylalanine. It carries out the reaction N-(9Z-octadecenoyl)-L-asparagine + H2O = L-asparagine + (9Z)-octadecenoate. The enzyme catalyses (9Z)-octadecenoate + glycine = N-(9Z-octadecenoyl)glycine + H2O. The catalysed reaction is N-(9Z-octadecenoyl)-L-lysine + H2O = L-lysine + (9Z)-octadecenoate. It catalyses the reaction N-(9Z-octadecenoyl)-L-methionine + H2O = (9Z)-octadecenoate + L-methionine. It carries out the reaction N-(9Z-octadecenoyl)-L-serine + H2O = L-serine + (9Z)-octadecenoate. The enzyme catalyses N-(9Z-octadecenoyl)-L-tryptophan + H2O = L-tryptophan + (9Z)-octadecenoate. The catalysed reaction is N-(9Z-octadecenoyl)-L-tyrosine + H2O = L-tyrosine + (9Z)-octadecenoate. It catalyses the reaction N-(9Z-octadecenoyl)-L-glutamine + H2O = L-glutamine + (9Z)-octadecenoate. It carries out the reaction N-(5Z,8Z,11Z,14Z-eicosatetraenoyl)-L-serine + H2O = (5Z,8Z,11Z,14Z)-eicosatetraenoate + L-serine. The enzyme catalyses (5Z,8Z,11Z,14Z)-eicosatetraenoate + L-phenylalanine = N-(5Z,8Z,11Z,14Z-eicosatetraenoyl)-L-phenylalanine + H2O. The catalysed reaction is N-(9Z-octadecenoyl)-L-leucine + H2O = L-leucine + (9Z)-octadecenoate. It catalyses the reaction L-phenylalanine + (9Z)-octadecenoate = N-(9Z-octadecenoyl)-L-phenylalanine + H2O. It participates in amino-acid metabolism. Its pathway is energy metabolism; electron transfer. It functions in the pathway lipid metabolism; fatty acid metabolism. Lipoproteins are powerful coactivators of PM20D1 activity in vitro and NAA biosynthesis in vivo. Its function is as follows. Secreted enzyme that regulates the endogenous N-fatty acyl amino acid (NAAs) tissue and circulating levels by functioning as a bidirectional NAA synthase/hydrolase. It condenses free fatty acids and free amino acids to generate NAAs and bidirectionally catalyzes the reverse hydrolysis reaction. Some of these NAAs stimulate oxidative metabolism via mitochondrial uncoupling, increasing energy expenditure in a UPC1-independent manner. Thereby, this secreted protein may indirectly regulate whole body energy expenditure. PM20D1 circulates in tight association with both low- and high-density (LDL and HDL,respectively) lipoprotein particles. In Mus musculus (Mouse), this protein is N-fatty-acyl-amino acid synthase/hydrolase PM20D1.